Reading from the N-terminus, the 427-residue chain is Zinc finger protein DPF3 (427 aa).

The interval 182–244 is disordered; that stretch reads LENDENADEV…NDAASQDDHD (63 aa). A compositionally biased stretch (acidic residues) spans 184–199; it reads NDENADEVNEEEDLEE. The segment covering 233–244 has biased composition (basic and acidic residues); sequence RRNDAASQDDHD. The C2H2-type zinc-finger motif lies at 247–270; that stretch reads YVCDICGKRYKNRPGLSYHYAHTH. Residues 272–301 form a disordered region; sequence ASEEGDEAREQETRSSPVHRNENHKPQKGP. Positions 279–296 are enriched in basic and acidic residues; the sequence is AREQETRSSPVHRNENHK. PHD-type zinc fingers lie at residues 308–368 and 365–415; these read NNYC…CKSC and CKSC…CREL.

The protein belongs to the requiem/DPF family. Component of the BAF complex. Interacts with acetylated histones H3 and H4. Component of neuron-specific chromatin remodeling complex (nBAF complex), a subfamily of ATP-dependent SWI/SNF chromatin remodeling complexes. As to expression, expressed in the heart and somites.

Its subcellular location is the nucleus. Functionally, muscle-specific component of the BAF complex, a multiprotein complex involved in transcriptional activation and repression of select genes by chromatin remodeling (alteration of DNA-nucleosome topology). Specifically binds acetylated lysines on histone 3 and 4. In the complex, it acts as a tissue-specific anchor between histone acetylations and methylations and chromatin remodeling. It thereby probably plays an essential role in heart and skeletal muscle development. Belongs to the neuron-specific chromatin remodeling complex (nBAF complex) and plays a role in neural development. The polypeptide is Zinc finger protein DPF3 (DPF3) (Gallus gallus (Chicken)).